Consider the following 221-residue polypeptide: 3-dehydroquinate dehydratase (221 aa).

3-dehydroquinate-binding positions include 33 to 35 (EIR) and Arg-63. The active-site Proton donor/acceptor is His-118. Catalysis depends on Lys-144, which acts as the Schiff-base intermediate with substrate. 3-dehydroquinate contacts are provided by Arg-181, Thr-200, and Gln-204.

It belongs to the type-I 3-dehydroquinase family. Homodimer.

The catalysed reaction is 3-dehydroquinate = 3-dehydroshikimate + H2O. The protein operates within metabolic intermediate biosynthesis; chorismate biosynthesis; chorismate from D-erythrose 4-phosphate and phosphoenolpyruvate: step 3/7. Its function is as follows. Involved in the third step of the chorismate pathway, which leads to the biosynthesis of aromatic amino acids. Catalyzes the cis-dehydration of 3-dehydroquinate (DHQ) and introduces the first double bond of the aromatic ring to yield 3-dehydroshikimate. This is 3-dehydroquinate dehydratase from Methanothermobacter thermautotrophicus (strain ATCC 29096 / DSM 1053 / JCM 10044 / NBRC 100330 / Delta H) (Methanobacterium thermoautotrophicum).